The following is a 716-amino-acid chain: Leucine-rich repeat neuronal protein 1 (716 aa).

Residues 1-25 (MARMSFVIAACQLVLGLLMTSLTES) form the signal peptide. Positions 26–72 (SIQNSECPQLCVCEIRPWFTPQSTYREATTVDCNDLRLTRIPSNLSS) constitute an LRRNT domain. At 26 to 631 (SIQNSECPQL…DISDQETSTA (606 aa)) the chain is on the extracellular side. LRR repeat units lie at residues 73–95 (DTQV…QQLF), 96–117 (NLTE…GLAN), 120–141 (QLTT…CLQD), 144–165 (NLQE…AFAG), 168–189 (NLLR…WFDS), 192–213 (NLEI…NFKP), 216–237 (NLRS…ALVG), 240–261 (SLES…ALQK), 264–285 (NLKF…DFKN), 313–335 (ELTK…AFRS), and 338–359 (ALES…TVES). 2 N-linked (GlcNAc...) asparagine glycosylation sites follow: N96 and N117. An LRRCT domain is found at 371–424 (NPLRCDCVIHWINSNKTNIRFMEPLSMFCAMPPEYKGHQVKEVLIQDSSEQCLP). N385 carries N-linked (GlcNAc...) asparagine glycosylation. Residues 424-515 (PMISHDSFPN…GADTRVATIK (92 aa)) form the Ig-like C2-type domain. Cysteines 447 and 499 form a disulfide. N517 is a glycosylation site (N-linked (GlcNAc...) asparagine). The 93-residue stretch at 525–617 (QVLKIYVKQT…SCVNVTTKNA (93 aa)) folds into the Fibronectin type-III domain. A helical transmembrane segment spans residues 632–652 (LAAVMGSMFAVISLASIAVYF). Topologically, residues 653–716 (AKRFKRKNYH…VDTSRSYYMW (64 aa)) are cytoplasmic. Residues 691–700 (DSEKDKDGSA) are compositionally biased toward basic and acidic residues. The interval 691-716 (DSEKDKDGSADTKPTQVDTSRSYYMW) is disordered. The span at 702-716 (TKPTQVDTSRSYYMW) shows a compositional bias: polar residues.

It localises to the membrane. In Homo sapiens (Human), this protein is Leucine-rich repeat neuronal protein 1 (LRRN1).